Consider the following 105-residue polypeptide: uncharacterized protein (105 aa).

This is an uncharacterized protein from Escherichia coli (Bacteriophage T4).